A 430-amino-acid polypeptide reads, in one-letter code: Pre-B-cell leukemia transcription factor 2 (430 aa).

The disordered stretch occupies residues 1–52 (MDERLLGPPPPGGGRGGLGLVGAEPGGPGEPPGGGDPGGGSGGVPGGRGKQD). Over residues 13 to 48 (GGRGGLGLVGAEPGGPGEPPGGGDPGGGSGGVPGGR) the composition is skewed to gly residues. The PBC domain maps to 48 to 243 (RGKQDIGDIL…VMILRSRFLD (196 aa)). The segment at 55–134 (DILQQIMTIT…EGVAGPEKGG (80 aa)) is PBC-A. 3 positions are modified to phosphoserine: S136, S151, and S159. The interval 137 to 243 (AAAAAAAAAS…VMILRSRFLD (107 aa)) is PBC-B. Residues 244–306 (ARRKRRNFSK…NKRIRYKKNI (63 aa)) constitute a DNA-binding region (homeobox; TALE-type). 2 disordered regions span residues 327 to 347 (GGHS…GGSF) and 375 to 430 (LRHS…DTSN). A phosphoserine mark is found at S330 and S395. The segment covering 409–418 (VTPSSVTSPT) has biased composition (polar residues).

Belongs to the TALE/PBX homeobox family. Forms heterodimers with MEIS1 and heterotrimers with MEIS1 and HOXA9. Interacts with PBXIP1.

The protein localises to the nucleus. Transcriptional activator that binds the sequence 5'-ATCAATCAA-3'. Activates transcription of PF4 in complex with MEIS1. This is Pre-B-cell leukemia transcription factor 2 (Pbx2) from Mus musculus (Mouse).